A 306-amino-acid chain; its full sequence is Pantothenate kinase (306 aa).

90-97 (GSVAVGKS) contributes to the ATP binding site.

This sequence belongs to the prokaryotic pantothenate kinase family.

The protein localises to the cytoplasm. The catalysed reaction is (R)-pantothenate + ATP = (R)-4'-phosphopantothenate + ADP + H(+). The protein operates within cofactor biosynthesis; coenzyme A biosynthesis; CoA from (R)-pantothenate: step 1/5. This is Pantothenate kinase from Lactococcus lactis subsp. cremoris (strain SK11).